The primary structure comprises 231 residues: Large ribosomal subunit protein uL1 (231 aa).

Belongs to the universal ribosomal protein uL1 family. Part of the 50S ribosomal subunit.

Its function is as follows. Binds directly to 23S rRNA. The L1 stalk is quite mobile in the ribosome, and is involved in E site tRNA release. Functionally, protein L1 is also a translational repressor protein, it controls the translation of the L11 operon by binding to its mRNA. This is Large ribosomal subunit protein uL1 from Polaromonas naphthalenivorans (strain CJ2).